We begin with the raw amino-acid sequence, 145 residues long: UPF0201 protein Saci_1285 (145 aa).

The protein belongs to the UPF0201 family.

This Sulfolobus acidocaldarius (strain ATCC 33909 / DSM 639 / JCM 8929 / NBRC 15157 / NCIMB 11770) protein is UPF0201 protein Saci_1285.